Here is a 72-residue protein sequence, read N- to C-terminus: MLIPWQDLSPETLENLIESFVLREGTDYGEHERTLEQKVADVKRQLQCGEAVLVWSELHETVNIMPRSQFRE.

It belongs to the UPF0270 family.

The polypeptide is UPF0270 protein YheU (Escherichia coli (strain ATCC 8739 / DSM 1576 / NBRC 3972 / NCIMB 8545 / WDCM 00012 / Crooks)).